The chain runs to 138 residues: Class I hydrophobin 3 (138 aa).

An N-terminal signal peptide occupies residues Met1–Ala16. Intrachain disulfides connect Cys40-Cys111, Cys48-Cys105, Cys49-Cys87, and Cys112-Cys130.

It belongs to the fungal hydrophobin family. In terms of assembly, self-assembles to form functional amyloid fibrils called rodlets. Self-assembly into fibrillar rodlets occurs spontaneously at hydrophobic:hydrophilic interfaces and the rodlets further associate laterally to form amphipathic monolayers.

It is found in the secreted. It localises to the cell wall. Functionally, aerial growth, conidiation, and dispersal of filamentous fungi in the environment rely upon a capability of their secreting small amphipathic proteins called hydrophobins (HPBs) with low sequence identity. Class I can self-assemble into an outermost layer of rodlet bundles on aerial cell surfaces, conferring cellular hydrophobicity that supports fungal growth, development and dispersal; whereas Class II form highly ordered films at water-air interfaces through intermolecular interactions but contribute nothing to the rodlet structure. HYD3 is a class I hydrophobin that contributes to the formation of aerial hyphae and fruiting bodies. The chain is Class I hydrophobin 3 from Cordyceps militaris (Caterpillar fungus).